A 229-amino-acid polypeptide reads, in one-letter code: 7-cyano-7-deazaguanine synthase (229 aa).

Residue 15–25 coordinates ATP; that stretch reads LSGGLDSATVV. 4 residues coordinate Zn(2+): Cys-194, Cys-204, Cys-207, and Cys-210.

This sequence belongs to the QueC family. The cofactor is Zn(2+).

The catalysed reaction is 7-carboxy-7-deazaguanine + NH4(+) + ATP = 7-cyano-7-deazaguanine + ADP + phosphate + H2O + H(+). Its pathway is purine metabolism; 7-cyano-7-deazaguanine biosynthesis. Functionally, catalyzes the ATP-dependent conversion of 7-carboxy-7-deazaguanine (CDG) to 7-cyano-7-deazaguanine (preQ(0)). This chain is 7-cyano-7-deazaguanine synthase, found in Pseudomonas syringae pv. syringae (strain B728a).